The chain runs to 185 residues: Ribosome-recycling factor (185 aa).

Belongs to the RRF family.

It is found in the cytoplasm. In terms of biological role, responsible for the release of ribosomes from messenger RNA at the termination of protein biosynthesis. May increase the efficiency of translation by recycling ribosomes from one round of translation to another. In Geotalea daltonii (strain DSM 22248 / JCM 15807 / FRC-32) (Geobacter daltonii), this protein is Ribosome-recycling factor.